The chain runs to 744 residues: Phosphoribosylformylglycinamidine synthase subunit PurL (744 aa).

His-50 is an active-site residue. Residues Tyr-53 and Lys-92 each coordinate ATP. Glu-94 contributes to the Mg(2+) binding site. Substrate-binding positions include 95-98 (SHNH) and Arg-117. Residue His-96 is the Proton acceptor of the active site. Mg(2+) is bound at residue Asp-118. Gln-241 lines the substrate pocket. Asp-269 provides a ligand contact to Mg(2+). 313–315 (ESQ) contacts substrate. Residues Asp-494 and Gly-531 each coordinate ATP. Asn-532 provides a ligand contact to Mg(2+). Residue Ser-534 coordinates substrate.

It belongs to the FGAMS family. As to quaternary structure, monomer. Part of the FGAM synthase complex composed of 1 PurL, 1 PurQ and 2 PurS subunits.

The protein localises to the cytoplasm. It catalyses the reaction N(2)-formyl-N(1)-(5-phospho-beta-D-ribosyl)glycinamide + L-glutamine + ATP + H2O = 2-formamido-N(1)-(5-O-phospho-beta-D-ribosyl)acetamidine + L-glutamate + ADP + phosphate + H(+). Its pathway is purine metabolism; IMP biosynthesis via de novo pathway; 5-amino-1-(5-phospho-D-ribosyl)imidazole from N(2)-formyl-N(1)-(5-phospho-D-ribosyl)glycinamide: step 1/2. Functionally, part of the phosphoribosylformylglycinamidine synthase complex involved in the purines biosynthetic pathway. Catalyzes the ATP-dependent conversion of formylglycinamide ribonucleotide (FGAR) and glutamine to yield formylglycinamidine ribonucleotide (FGAM) and glutamate. The FGAM synthase complex is composed of three subunits. PurQ produces an ammonia molecule by converting glutamine to glutamate. PurL transfers the ammonia molecule to FGAR to form FGAM in an ATP-dependent manner. PurS interacts with PurQ and PurL and is thought to assist in the transfer of the ammonia molecule from PurQ to PurL. In Chelativorans sp. (strain BNC1), this protein is Phosphoribosylformylglycinamidine synthase subunit PurL.